Here is a 313-residue protein sequence, read N- to C-terminus: Serine/threonine-protein phosphatase CPPED1 (313 aa).

A Phosphoserine modification is found at S2. The tract at residues 47-250 is catalytic; that stretch reads KAWATGDCDN…AVFSGHYHRN (204 aa). The a divalent metal cation site is built by D53, D90, N127, and H246. S293 is modified (phosphoserine).

It belongs to the metallophosphoesterase superfamily. CPPED1 family. A divalent metal cation is required as a cofactor.

The protein resides in the cytoplasm. It carries out the reaction O-phospho-L-seryl-[protein] + H2O = L-seryl-[protein] + phosphate. The enzyme catalyses O-phospho-L-threonyl-[protein] + H2O = L-threonyl-[protein] + phosphate. Protein phosphatase that dephosphorylates AKT family kinase specifically at 'Ser-473', blocking cell cycle progression and promoting cell apoptosis. May play an inhibitory role in glucose uptake by adipocytes. This is Serine/threonine-protein phosphatase CPPED1 (CPPED1) from Bos taurus (Bovine).